The sequence spans 465 residues: GTPase Der (465 aa).

2 consecutive EngA-type G domains span residues 3-166 (FLVA…LNEY) and 184-358 (IHFS…ACAN). Residues 9 to 16 (GRANVGKS), 56 to 60 (DTGGI), 118 to 121 (NKVD), 190 to 197 (GRPNVGKS), 237 to 241 (DTAGV), and 302 to 305 (NKWD) each bind GTP. Residues 359–443 (KKITTADATR…PIVFEFKQSE (85 aa)) form the KH-like domain. The disordered stretch occupies residues 446–465 (FADRKNKRSKDEGSKSKKVK).

It belongs to the TRAFAC class TrmE-Era-EngA-EngB-Septin-like GTPase superfamily. EngA (Der) GTPase family. Associates with the 50S ribosomal subunit.

Its function is as follows. GTPase that plays an essential role in the late steps of ribosome biogenesis. The sequence is that of GTPase Der from Francisella tularensis subsp. novicida (strain U112).